We begin with the raw amino-acid sequence, 193 residues long: Cysteine and glycine-rich protein 1 (193 aa).

One can recognise an LIM zinc-binding 1 domain in the interval 10 to 61; sequence CGVCQKTVYFAEEVQCEGSSFHKSCFLCLVCKKNLDSTTVAVHGEEIYCKSC. Residues 64–69 carry the Nuclear localization signal motif; the sequence is KKYGPK. Serine 81 carries the phosphoserine modification. An N6-acetyllysine mark is found at lysine 84, lysine 112, lysine 131, lysine 137, and lysine 161. An LIM zinc-binding 2 domain is found at 119–170; sequence CPRCSQAVYAAEKVIGAGKSWHKSCFRCAKCGKGLESTTLADKDGEIYCKGC. A Phosphoserine modification is found at serine 192.

As to quaternary structure, interacts with ASCC1; ASCC2 and TRIP4.

It localises to the nucleus. Its function is as follows. Could play a role in neuronal development. The sequence is that of Cysteine and glycine-rich protein 1 (CSRP1) from Bos taurus (Bovine).